A 220-amino-acid polypeptide reads, in one-letter code: Protein GrpE (220 aa).

This sequence belongs to the GrpE family. As to quaternary structure, homodimer.

The protein localises to the cytoplasm. Functionally, participates actively in the response to hyperosmotic and heat shock by preventing the aggregation of stress-denatured proteins, in association with DnaK and GrpE. It is the nucleotide exchange factor for DnaK and may function as a thermosensor. Unfolded proteins bind initially to DnaJ; upon interaction with the DnaJ-bound protein, DnaK hydrolyzes its bound ATP, resulting in the formation of a stable complex. GrpE releases ADP from DnaK; ATP binding to DnaK triggers the release of the substrate protein, thus completing the reaction cycle. Several rounds of ATP-dependent interactions between DnaJ, DnaK and GrpE are required for fully efficient folding. This Bartonella quintana (strain Toulouse) (Rochalimaea quintana) protein is Protein GrpE.